The chain runs to 382 residues: Fimbrial usher domain-containing protein YdeT (382 aa).

This Escherichia coli (strain K12) protein is Fimbrial usher domain-containing protein YdeT (ydeT).